Reading from the N-terminus, the 210-residue chain is Small ribosomal subunit protein uS5 (210 aa).

Over residues 1-23 the composition is skewed to basic and acidic residues; it reads MARTPSSDRPERGRGGERGDRPN. The disordered stretch occupies residues 1-40; it reads MARTPSSDRPERGRGGERGDRPNRGRGGAEQTPREREESE. One can recognise an S5 DRBM domain in the interval 41 to 104; sequence FVDKLVHINR…EQAKRNMIKI (64 aa).

This sequence belongs to the universal ribosomal protein uS5 family. In terms of assembly, part of the 30S ribosomal subunit. Contacts proteins S4 and S8.

In terms of biological role, with S4 and S12 plays an important role in translational accuracy. Its function is as follows. Located at the back of the 30S subunit body where it stabilizes the conformation of the head with respect to the body. The chain is Small ribosomal subunit protein uS5 from Paramagnetospirillum magneticum (strain ATCC 700264 / AMB-1) (Magnetospirillum magneticum).